The following is a 250-amino-acid chain: Cruxrhodopsin-1 (250 aa).

Topologically, residues methionine 1 to isoleucine 9 are extracellular. A helical transmembrane segment spans residues tryptophan 10–alanine 27. Residues arginine 28 to tyrosine 41 lie on the Cytoplasmic side of the membrane. A helical transmembrane segment spans residues isoleucine 42–leucine 60. At glycine 61–tyrosine 77 the chain is on the extracellular side. Residues tryptophan 78 to aspartate 94 traverse the membrane as a helical segment. Residues leucine 95–threonine 105 lie on the Cytoplasmic side of the membrane. The chain crosses the membrane as a helical span at residues isoleucine 106–leucine 125. At serine 126–arginine 138 the chain is on the extracellular side. The helical transmembrane segment at leucine 139–serine 158 threads the bilayer. Topologically, residues serine 159–lysine 176 are cytoplasmic. The helical transmembrane segment at threonine 177–isoleucine 195 threads the bilayer. Residues glycine 196–isoleucine 207 lie on the Extracellular side of the membrane. Residues glutamate 208–leucine 227 form a helical membrane-spanning segment. Residue lysine 220 is modified to N6-(retinylidene)lysine. Residues leucine 228 to aspartate 250 are Cytoplasmic-facing.

The protein belongs to the archaeal/bacterial/fungal opsin family. As to quaternary structure, homotrimer.

Its subcellular location is the cell membrane. Its function is as follows. Light-driven proton pump. The chain is Cruxrhodopsin-1 (cop1) from Haloarcula argentinensis.